The sequence spans 261 residues: Indole-3-glycerol phosphate synthase (261 aa).

It belongs to the TrpC family.

The enzyme catalyses 1-(2-carboxyphenylamino)-1-deoxy-D-ribulose 5-phosphate + H(+) = (1S,2R)-1-C-(indol-3-yl)glycerol 3-phosphate + CO2 + H2O. It functions in the pathway amino-acid biosynthesis; L-tryptophan biosynthesis; L-tryptophan from chorismate: step 4/5. In Burkholderia vietnamiensis (strain G4 / LMG 22486) (Burkholderia cepacia (strain R1808)), this protein is Indole-3-glycerol phosphate synthase.